Consider the following 340-residue polypeptide: N-acetyl-gamma-glutamyl-phosphate reductase (340 aa).

The active site involves Cys146.

It belongs to the NAGSA dehydrogenase family. Type 1 subfamily.

It localises to the cytoplasm. It carries out the reaction N-acetyl-L-glutamate 5-semialdehyde + phosphate + NADP(+) = N-acetyl-L-glutamyl 5-phosphate + NADPH + H(+). It participates in amino-acid biosynthesis; L-arginine biosynthesis; N(2)-acetyl-L-ornithine from L-glutamate: step 3/4. Catalyzes the NADPH-dependent reduction of N-acetyl-5-glutamyl phosphate to yield N-acetyl-L-glutamate 5-semialdehyde. The protein is N-acetyl-gamma-glutamyl-phosphate reductase of Streptococcus sanguinis (strain SK36).